The following is an 81-amino-acid chain: Photosystem I iron-sulfur center (81 aa).

4Fe-4S ferredoxin-type domains lie at 2–31 (AHSV…MIPW) and 39–68 (IASA…VRVY). [4Fe-4S] cluster contacts are provided by Cys11, Cys14, Cys17, Cys21, Cys48, Cys51, Cys54, and Cys58.

In terms of assembly, the eukaryotic PSI reaction center is composed of at least 11 subunits. Requires [4Fe-4S] cluster as cofactor.

It localises to the plastid. The protein localises to the chloroplast thylakoid membrane. The catalysed reaction is reduced [plastocyanin] + hnu + oxidized [2Fe-2S]-[ferredoxin] = oxidized [plastocyanin] + reduced [2Fe-2S]-[ferredoxin]. In terms of biological role, apoprotein for the two 4Fe-4S centers FA and FB of photosystem I (PSI); essential for photochemical activity. FB is the terminal electron acceptor of PSI, donating electrons to ferredoxin. The C-terminus interacts with PsaA/B/D and helps assemble the protein into the PSI complex. Required for binding of PsaD and PsaE to PSI. PSI is a plastocyanin-ferredoxin oxidoreductase, converting photonic excitation into a charge separation, which transfers an electron from the donor P700 chlorophyll pair to the spectroscopically characterized acceptors A0, A1, FX, FA and FB in turn. This is Photosystem I iron-sulfur center from Psilotum nudum (Whisk fern).